Here is a 484-residue protein sequence, read N- to C-terminus: Probable cytochrome P450 555A1 (484 aa).

The chain crosses the membrane as a helical span at residues 1–21; that stretch reads MIIIVIVVFLFYFSFLNLNLN. Heme is bound at residue C432.

This sequence belongs to the cytochrome P450 family. Requires heme as cofactor.

It localises to the membrane. The polypeptide is Probable cytochrome P450 555A1 (cyp555A1) (Dictyostelium discoideum (Social amoeba)).